A 369-amino-acid polypeptide reads, in one-letter code: Flagellar P-ring protein (369 aa).

A signal peptide spans 1 to 23; the sequence is MIKQFAVSLLLVLLTLVTTTASA.

This sequence belongs to the FlgI family. In terms of assembly, the basal body constitutes a major portion of the flagellar organelle and consists of four rings (L,P,S, and M) mounted on a central rod.

It is found in the periplasm. It localises to the bacterial flagellum basal body. Assembles around the rod to form the L-ring and probably protects the motor/basal body from shearing forces during rotation. This is Flagellar P-ring protein from Photorhabdus laumondii subsp. laumondii (strain DSM 15139 / CIP 105565 / TT01) (Photorhabdus luminescens subsp. laumondii).